A 363-amino-acid chain; its full sequence is tRNA(Met) cytidine acetate ligase (363 aa).

ATP contacts are provided by residues 7–20 (IAEY…HKYL), glycine 96, asparagine 152, and arginine 175.

It belongs to the TmcAL family.

It is found in the cytoplasm. It carries out the reaction cytidine(34) in elongator tRNA(Met) + acetate + ATP = N(4)-acetylcytidine(34) in elongator tRNA(Met) + AMP + diphosphate. Catalyzes the formation of N(4)-acetylcytidine (ac(4)C) at the wobble position of elongator tRNA(Met), using acetate and ATP as substrates. First activates an acetate ion to form acetyladenylate (Ac-AMP) and then transfers the acetyl group to tRNA to form ac(4)C34. This chain is tRNA(Met) cytidine acetate ligase, found in Streptococcus suis (strain 98HAH33).